The chain runs to 720 residues: Beta-glucan synthesis-associated protein KRE6 (720 aa).

Composition is skewed to polar residues over residues M1 to L17, L31 to L51, and S69 to S90. Positions M1–S90 are disordered. The Cytoplasmic segment spans residues M1 to G252. 6 positions are modified to phosphoserine: S81, S116, S133, S134, S136, and S139. 2 disordered regions span residues T117–S142 and Q167–S189. The segment covering S133–S142 has biased composition (low complexity). Residues L253–L273 traverse the membrane as a helical; Signal-anchor for type II membrane protein segment. The Lumenal segment spans residues T274–S720. A GH16 domain is found at T289 to A664. 5 N-linked (GlcNAc...) asparagine glycosylation sites follow: N374, N461, N538, N563, and N691.

Belongs to the SKN1/KRE6 family. In terms of assembly, the cytoplasmic domain interacts with the actin patch assembly proteins LAS17 and SLA1. Interacts with KEG1.

It localises to the golgi apparatus membrane. Involved in the synthesis of (1-&gt;6)- and (1-&gt;3)-beta-D-glucan polymers of the yeast cell wall in vivo. It is required for full activity of beta-glucan synthase in vitro. May be involved in the maturation and transport of cell wall proteins (CWP) to the cell wall. May act as a transglucosidase and contribute to the construction of a protein-bound glucan-structure that acts as an acceptor site for the addition of (1-&gt;6)-beta-D-glucan at the cell surface. The chain is Beta-glucan synthesis-associated protein KRE6 (KRE6) from Saccharomyces cerevisiae (strain ATCC 204508 / S288c) (Baker's yeast).